A 223-amino-acid polypeptide reads, in one-letter code: N-acetylmuramate alpha-1-phosphate uridylyltransferase (223 aa).

UTP-binding positions include 11–13 and lysine 23; that span reads GER. Asparagine 105 contributes to the substrate binding site. Residue aspartate 107 coordinates Mg(2+). Residues aspartate 140 and aspartate 205 each contribute to the substrate site. Aspartate 205 is a binding site for Mg(2+).

The protein belongs to the nucleotidyltransferase MurU family. As to quaternary structure, monomer. It depends on Mg(2+) as a cofactor.

The catalysed reaction is N-acetyl-alpha-D-muramate 1-phosphate + UDP + H(+) = UDP-N-acetyl-alpha-D-muramate + phosphate. Its pathway is cell wall biogenesis; peptidoglycan recycling. Its activity is regulated as follows. Is completely inhibited by EDTA in vitro. Catalyzes the formation of UDP-N-acetylmuramate (UDP-MurNAc), a crucial precursor of the bacterial peptidoglycan cell wall, from UTP and MurNAc-alpha-1P. Is involved in peptidoglycan recycling as part of a cell wall recycling pathway that bypasses de novo biosynthesis of the peptidoglycan precursor UDP-MurNAc. Plays a role in intrinsic resistance to fosfomycin, which targets the de novo synthesis of UDP-MurNAc. Is not able to use GlcNAc-alpha-1P and GalNAc-alpha-1P as substrates. Cannot accept other nucleotide triphosphates (ATP, CTP, TTP, or GTP) than UTP. The protein is N-acetylmuramate alpha-1-phosphate uridylyltransferase of Pseudomonas putida (strain ATCC 47054 / DSM 6125 / CFBP 8728 / NCIMB 11950 / KT2440).